The primary structure comprises 287 residues: Phosphoribosylaminoimidazole-succinocarboxamide synthase (287 aa).

It belongs to the SAICAR synthetase family.

The catalysed reaction is 5-amino-1-(5-phospho-D-ribosyl)imidazole-4-carboxylate + L-aspartate + ATP = (2S)-2-[5-amino-1-(5-phospho-beta-D-ribosyl)imidazole-4-carboxamido]succinate + ADP + phosphate + 2 H(+). It participates in purine metabolism; IMP biosynthesis via de novo pathway; 5-amino-1-(5-phospho-D-ribosyl)imidazole-4-carboxamide from 5-amino-1-(5-phospho-D-ribosyl)imidazole-4-carboxylate: step 1/2. The sequence is that of Phosphoribosylaminoimidazole-succinocarboxamide synthase from Neisseria meningitidis serogroup A / serotype 4A (strain DSM 15465 / Z2491).